Here is a 262-residue protein sequence, read N- to C-terminus: Catechol O-methyltransferase domain-containing protein 1 (262 aa).

The helical; Signal-anchor for type II membrane protein transmembrane segment at 12 to 32 threads the bilayer; sequence AALALGSAALGAAFATGLFLG. S-adenosyl-L-methionine contacts are provided by residues Asp-108, 110 to 111, Ser-116, Glu-134, Val-135, Ala-163, Asp-185, Asp-187, and Tyr-194; that span reads GT.

The protein belongs to the class I-like SAM-binding methyltransferase superfamily. Cation-dependent O-methyltransferase family. Homodimer.

It is found in the membrane. Putative O-methyltransferase. In Homo sapiens (Human), this protein is Catechol O-methyltransferase domain-containing protein 1 (COMTD1).